The primary structure comprises 68 residues: Probable tautomerase jhp_0858 (68 aa).

Pro2 serves as the catalytic Proton acceptor; via imino nitrogen.

The protein belongs to the 4-oxalocrotonate tautomerase family.

This is Probable tautomerase jhp_0858 from Helicobacter pylori (strain J99 / ATCC 700824) (Campylobacter pylori J99).